The chain runs to 645 residues: UvrABC system protein B (645 aa).

The 391-residue stretch at 24–414 (AGLNDNKRDQ…LFVEQVIRPT (391 aa)) folds into the Helicase ATP-binding domain. ATP is bound at residue 37-44 (GVTGSGKT). The Beta-hairpin signature appears at 90–113 (YYDYYQPEAYLPQTDTYIEKDSVI). Residues 426–591 (AEAQVYDVVH…VLPKTIIKPI (166 aa)) form the Helicase C-terminal domain. Positions 610 to 645 (KDTVSSLRKQMLAHAKNLEFEEAAKIKNIIGRINNL) constitute a UVR domain.

It belongs to the UvrB family. In terms of assembly, forms a heterotetramer with UvrA during the search for lesions. Interacts with UvrC in an incision complex.

It localises to the cytoplasm. The UvrABC repair system catalyzes the recognition and processing of DNA lesions. A damage recognition complex composed of 2 UvrA and 2 UvrB subunits scans DNA for abnormalities. Upon binding of the UvrA(2)B(2) complex to a putative damaged site, the DNA wraps around one UvrB monomer. DNA wrap is dependent on ATP binding by UvrB and probably causes local melting of the DNA helix, facilitating insertion of UvrB beta-hairpin between the DNA strands. Then UvrB probes one DNA strand for the presence of a lesion. If a lesion is found the UvrA subunits dissociate and the UvrB-DNA preincision complex is formed. This complex is subsequently bound by UvrC and the second UvrB is released. If no lesion is found, the DNA wraps around the other UvrB subunit that will check the other stand for damage. The chain is UvrABC system protein B from Wolbachia sp. subsp. Brugia malayi (strain TRS).